A 146-amino-acid polypeptide reads, in one-letter code: Anti-sigma F factor (146 aa).

Belongs to the anti-sigma-factor family.

It catalyses the reaction L-seryl-[protein] + ATP = O-phospho-L-seryl-[protein] + ADP + H(+). The enzyme catalyses L-threonyl-[protein] + ATP = O-phospho-L-threonyl-[protein] + ADP + H(+). Its function is as follows. Binds to sigma F and blocks its ability to form an RNA polymerase holoenzyme (E-sigma F). Phosphorylates SpoIIAA on a serine residue. This phosphorylation may enable SpoIIAA to act as an anti-anti-sigma factor that counteracts SpoIIAB and thus releases sigma F from inhibition. The protein is Anti-sigma F factor of Bacillus cereus (strain ATCC 14579 / DSM 31 / CCUG 7414 / JCM 2152 / NBRC 15305 / NCIMB 9373 / NCTC 2599 / NRRL B-3711).